The primary structure comprises 60 residues: Large ribosomal subunit protein bL32 (60 aa).

The disordered stretch occupies residues 1–36 (MAVQQNKKSPSKRGMHRSHNALNTPGLAIEPTTGET). Residues 9–19 (SPSKRGMHRSH) show a composition bias toward basic residues.

It belongs to the bacterial ribosomal protein bL32 family.

This chain is Large ribosomal subunit protein bL32, found in Methylibium petroleiphilum (strain ATCC BAA-1232 / LMG 22953 / PM1).